The following is an 81-amino-acid chain: Saposin-C (81 aa).

Residues 1–81 (ESVTCKACEY…CSELGLCMSG (81 aa)) form the Saposin B-type domain. 3 disulfides stabilise this stretch: Cys-5/Cys-78, Cys-8/Cys-72, and Cys-36/Cys-47. N-linked (GlcNAc...) asparagine glycosylation is present at Asn-22.

Functionally, saposin-A and saposin-C stimulate the hydrolysis of glucosylceramide by beta-glucosylceramidase (EC 3.2.1.45) and galactosylceramide by beta-galactosylceramidase (EC 3.2.1.46). Saposin-C apparently acts by combining with the enzyme and acidic lipid to form an activated complex, rather than by solubilizing the substrate. The polypeptide is Saposin-C (PSAP) (Cavia porcellus (Guinea pig)).